Consider the following 161-residue polypeptide: Regulator of ribonuclease activity A (161 aa).

This sequence belongs to the RraA family. In terms of assembly, homotrimer. Binds to both RNA-binding sites in the C-terminal region of Rne and to RhlB.

The protein resides in the cytoplasm. Its function is as follows. Globally modulates RNA abundance by binding to RNase E (Rne) and regulating its endonucleolytic activity. Can modulate Rne action in a substrate-dependent manner by altering the composition of the degradosome. Modulates RNA-binding and helicase activities of the degradosome. The protein is Regulator of ribonuclease activity A of Pseudoalteromonas atlantica (strain T6c / ATCC BAA-1087).